A 72-amino-acid polypeptide reads, in one-letter code: Translation initiation factor IF-1 (72 aa).

The 72-residue stretch at 1–72 (MAKDDVIQMQ…SRARIVFRTK (72 aa)) folds into the S1-like domain.

The protein belongs to the IF-1 family. In terms of assembly, component of the 30S ribosomal translation pre-initiation complex which assembles on the 30S ribosome in the order IF-2 and IF-3, IF-1 and N-formylmethionyl-tRNA(fMet); mRNA recruitment can occur at any time during PIC assembly.

The protein localises to the cytoplasm. Functionally, one of the essential components for the initiation of protein synthesis. Stabilizes the binding of IF-2 and IF-3 on the 30S subunit to which N-formylmethionyl-tRNA(fMet) subsequently binds. Helps modulate mRNA selection, yielding the 30S pre-initiation complex (PIC). Upon addition of the 50S ribosomal subunit IF-1, IF-2 and IF-3 are released leaving the mature 70S translation initiation complex. The chain is Translation initiation factor IF-1 from Herminiimonas arsenicoxydans.